A 264-amino-acid polypeptide reads, in one-letter code: uncharacterized protein (264 aa).

The segment at 235 to 264 is disordered; sequence ESSDEEDNDDDIINNDTNNDINNDDIEIKT. A compositionally biased stretch (acidic residues) spans 237–247; sequence SDEEDNDDDII.

This is an uncharacterized protein from Acanthamoeba polyphaga mimivirus (APMV).